We begin with the raw amino-acid sequence, 2596 residues long: MMLDRIMFLLFFILSLVIGSFSEYLDDKYYSTNSIDVVCKPCAVPSSNSVIWLPASRPPCLHPGQPIIHWPDLSDNLACPVPGLPDSVHSSQISLLEGEGLLLTKERICFFDGPIDFHYDYVCDGKLYRSKMRIGHSIASKKKLETRRTKRWARRRNPDANAVHFQQEKYVKELPEDTPIETIIASVKASHASSQPLYYSMVAPQDSRSQNLFTLDTMSGEIRLAKSMDREVLDKHILKVTAYERVDPTISASTTVVVHVLDVQDNSPIFEKDSYFGEIREDAPIGTTVLSVFARDLDSGENGEIEYSLGEGNGKNLLAINAKSGVIQTAAPLDRETLSLIRLDVIASDKGTPKRESTAMVEITVVDVNDNAPVFASDSYNVTILENITIPAVIATVKATDEDFGTNGKVHYSMASSSGIGGLTIDYSTGEVTLRERIDAKNSPITAVIRAKDGAQPALSSTVPLTINVIDINDHAPTLIAAQKMITLEENVAIGEEVGRVYAIDEDSGPNGIIKYSMEGSEDFIIDEDSGLIKTTKLLDRETTARYSLKVTARDMGTPSLNTSTTIAVVLKDINDNAPTFDKKEYNVTISEEMPRGSQIITLKAVDNDEDQKITYRIEEADREVFSILDIGDQGAILSVSGELKRQDHKVRVEISATDQGGLQGRCVVNVFIDDVNSAPYFNDHPFSVKIPEHSPIGYPVITLKAEDHDRGDNARIVYSIDSSQFFRIDPSSGDISVSSDLDREDRATFSVIVTASDHASPPLNTSTQIEVILDDINDNSPQFTSSSYAATISEDIPVGTSFLQVSAIDADIGPNGIVDYFLNESSSSPSIQLFRLDRTSGTLRVSSKLDREQFAVIVLPIFARDRGTPSLSAASEITLTLSDVNDNAPTFEQLSYDLYIAENSPVGSTVGTIVARDADEGDNADISFRIFGGADAKLFDIEEDAEQNGVVRILTRAEFDYEAKANKFFFELQASSGQLSSTVPVRIHVSDVNDNKPALKDFVILMNRFDNVQMARQIGFIPAFDPDQNATLEYFLEENDLIEAEKYTGKILVKQEWKRNMDVSFKTCVSDGANTECSTCRFIHVLVEPEWLSESFTLSLARMTVDDFWDPLVFQRFRDAMSTLSNWKPSDIHVIGVKQHLDDVIYINIAITDHGRVVRGWRAIELVKESIKKLEKMTLLQVEVIRDESCANEPCSHMAKCRQTQKFVGEMKAHETDNFIARTLNTVNTFVCECPSGFTSSGAHGDCDTRIDECYRGRCSNNSTCVAFENTYQCECKPGWIGRHCEISVHALTCVPGYCMSDSLCELDGNQMKCRHCKYHGEDTDERCRLRSVSFDGEGLLNVNLDLPRTQWTMKFRVSTIAHNGVLVFTGDKRSDFVEVSVVDRVLKVQFSLGGEKIDAKMENDVENRINDGEWHTVALEYSNKQITMSLDDCETNPSLLLNTSPNCAIRAKLNLEKKCEDPTVPCYRYLDISNGLFLGGRPGTSKQIEKAFSGCISDLSVDKEDVDFSTIKEMHKVGQVHEGCKHRKDFCSTSDGQCSATSKCVNRWGGRICSCPQSVHSTGECVGALGTQDLRGHSLFEEESFVLYQPSQVSVPFEVSFEFRTSRADMQVFALEFTQRSVHYNLEVDDGTLKYNIGDSEVELPAPEVTSKHWMNVVIKFEADSVATSINGIYSAEAKASISDMNLESLYFGIAPGTGHPSRFEGCIRNVLVDGRSISVKKKGKTRAGCVVPNRCSVDSICPAESTCHRAWNKHKCKCHKSFVGDTCLPVCSVANVCSSGTCVSSNTTAGYECICPAGKTGKNCQLEAPKQMCPSGWWGTFPRCRRCSCAQTKDYEAQCDKKTGACQCKKSHFSTINGCVKCECGFGADSTECSADGHCKCNGDAVGRRCDRCSRFDHQLDSKTLKCRPVSGKCPSEIEYSIQWPASQKGSIVRQSCPVGESGLATRKCLETGRWSDVNAWNCTRPEYSIMVNKFEILEPSKLLTMVANATNTESSIRGRNQQIAAEALSRLVDYEQSMPMKGRAHIKDMKFTEKLIESLGRVMSEQPADEYSTLISKLWNYAETVAEIHENVNFLSPFFVANDHIVFASDKLDFGNILPKFNNFVDLRPTGFPRVRAIVTGTTQVVYSIVPYPRCNRCENPMIAIVANTSDPVIVEFEIEEDDGWKYPECVRFDEKSGTWTARGAALIGLNLTHAACEYNRIGVFTMFVNDQSSSIVRVAQMDNMTSPAIAGVALFLCFLSILLTLSRRSLKTHSVRIGFILFFAINILNLFFVHKTAINQAYCPVRNAMLSFTSSAPFAWLFLYGLYIYRMLADGSSSPSLTTSLLVGIVFPCLISFTTFFVTDQCSLSPHLWLFWCIILPIGLFLLLSFYAAATSVLVSLHKKYDVFVAKYNVKRAVFQHFILTIFTLGMTLTGLFANQLPLPMEIMEISQSIIYLIAALVIFLWCVCDITTKASDSNPSMWLDNQKSVMAESTMADPQCASPLLSPRHQHHEVPMDSEWVPDVNPSNHYHTSINEPDTPRRLLLPQNRDVINILSSPDQILNEGVGHVYRNNMGSLPRLRSAQDEADDAYYTYTASRKYKNTTSTFNRE.

An N-terminal signal peptide occupies residues 1 to 22 (MMLDRIMFLLFFILSLVIGSFS). Topologically, residues 23 to 2229 (EYLDDKYYST…IVRVAQMDNM (2207 aa)) are extracellular. 8 consecutive Cadherin domains span residues 166-270 (QQEK…SPIF), 271-375 (EKDS…APVF), 376-479 (ASDS…APTL), 480-581 (IAAQ…APTF), 582-682 (DKKE…APYF), 683-784 (NDHP…SPQF), 785-892 (TSSS…APTF), and 893-1000 (EQLS…KPAL). Residues asparagine 381, asparagine 387, asparagine 562, asparagine 587, asparagine 765, and asparagine 824 are each glycosylated (N-linked (GlcNAc...) asparagine). Residues asparagine 1030 and asparagine 1263 are each glycosylated (N-linked (GlcNAc...) asparagine). Residues 1251–1287 (RIDECYRGRCSNNSTCVAFENTYQCECKPGWIGRHCE) enclose the EGF-like 1 domain. 12 cysteine pairs are disulfide-bonded: cysteine 1255/cysteine 1266, cysteine 1260/cysteine 1275, cysteine 1277/cysteine 1286, cysteine 1497/cysteine 1526, cysteine 1533/cysteine 1546, cysteine 1540/cysteine 1555, cysteine 1557/cysteine 1567, cysteine 1709/cysteine 1732, cysteine 1738/cysteine 1750, cysteine 1744/cysteine 1759, cysteine 1761/cysteine 1770, and cysteine 1780/cysteine 1785. In terms of domain architecture, Laminin G-like 1 spans 1333 to 1526 (SVSFDGEGLL…HKVGQVHEGC (194 aa)). The region spanning 1529–1568 (RKDFCSTSDGQCSATSKCVNRWGGRICSCPQSVHSTGECV) is the EGF-like 2 domain. The Laminin G-like 2 domain occupies 1577–1732 (RGHSLFEEES…KKKGKTRAGC (156 aa)). 2 EGF-like domains span residues 1734-1771 (VPNR…DTCL) and 1776-1808 (VANV…KNCQ). N-linked (GlcNAc...) asparagine glycosylation is present at asparagine 1789. A disulfide bond links cysteine 1798 and cysteine 1807. N-linked (GlcNAc...) asparagine glycans are attached at residues asparagine 1965, asparagine 1992, asparagine 2152, asparagine 2195, and asparagine 2228. The GAIN-B domain maps to 2054–2219 (EYSTLISKLW…TMFVNDQSSS (166 aa)). An intrachain disulfide couples cysteine 2174 to cysteine 2201. Residues 2174-2219 (CVRFDEKSGTWTARGAALIGLNLTHAACEYNRIGVFTMFVNDQSSS) form a GPS region. A helical membrane pass occupies residues 2230–2250 (TSPAIAGVALFLCFLSILLTL). Topologically, residues 2251-2261 (SRRSLKTHSVR) are cytoplasmic. A helical transmembrane segment spans residues 2262-2282 (IGFILFFAINILNLFFVHKTA). Over 2283 to 2292 (INQAYCPVRN) the chain is Extracellular. Residues 2293–2313 (AMLSFTSSAPFAWLFLYGLYI) traverse the membrane as a helical segment. The Cytoplasmic portion of the chain corresponds to 2314 to 2326 (YRMLADGSSSPSL). The chain crosses the membrane as a helical span at residues 2327–2347 (TTSLLVGIVFPCLISFTTFFV). Over 2348 to 2356 (TDQCSLSPH) the chain is Extracellular. A helical transmembrane segment spans residues 2357-2377 (LWLFWCIILPIGLFLLLSFYA). The Cytoplasmic segment spans residues 2378–2401 (AATSVLVSLHKKYDVFVAKYNVKR). Residues 2402 to 2422 (AVFQHFILTIFTLGMTLTGLF) traverse the membrane as a helical segment. Over 2423 to 2437 (ANQLPLPMEIMEISQ) the chain is Extracellular. The chain crosses the membrane as a helical span at residues 2438-2458 (SIIYLIAALVIFLWCVCDITT). The Cytoplasmic portion of the chain corresponds to 2459-2596 (KASDSNPSMW…KNTTSTFNRE (138 aa)).

This sequence belongs to the G-protein coupled receptor 2 family. LN-TM7 subfamily. In terms of tissue distribution, expressed in a region of neuropil around the nerve ring and the ventral cord (at protein level). Expressed in the head, tail, ventral cord, nerve ring and neurons including HSN neurons. Expressed in DA, VA, and VB and weakly in the DB cholinergic neurons. Not expressed in ventral D-type GABAergic motorneurons.

The protein resides in the cell membrane. The protein localises to the cell projection. It is found in the axon. It localises to the dendrite. Functionally, during ventral cord development, required for axon fasciculation and navigation, mediating both pioneer and follower axon extension, guidance and track formation. Acts in CEPsh glia and SubL neurons to guide follower axons into the nerve ring. Promotes motorneuron development by positively regulating the extension of the anterior neurite of ventral D-type GABAergic motorneurons along the anterior-posterior axis of the ventral nerve cord. Plays a role in synaptogenesis by regulating synaptic vesicle accumulation at GABAergic and cholinergic neuromuscular junctions. This is Cadherin EGF LAG seven-pass G-type receptor fmi-1 from Caenorhabditis elegans.